A 185-amino-acid chain; its full sequence is uncharacterized protein (185 aa).

Residues 17–137 enclose the G domain; it reads GKSSIMNALF…QKPIIVVINK (121 aa).

This is an uncharacterized protein from Methanocaldococcus jannaschii (strain ATCC 43067 / DSM 2661 / JAL-1 / JCM 10045 / NBRC 100440) (Methanococcus jannaschii).